A 389-amino-acid chain; its full sequence is Dihydroorotase (389 aa).

Zn(2+)-binding residues include His-51 and His-53. Residues 53–55 (HVR) and Asn-85 contribute to the substrate site. The Zn(2+) site is built by Lys-133, His-158, His-193, and Asp-256. The residue at position 133 (Lys-133) is an N6-carboxylysine. Asp-256 is an active-site residue. Substrate is bound by residues His-260 and 274–275 (PG).

It belongs to the metallo-dependent hydrolases superfamily. DHOase family. Class I DHOase subfamily. The cofactor is Zn(2+).

It carries out the reaction (S)-dihydroorotate + H2O = N-carbamoyl-L-aspartate + H(+). It participates in pyrimidine metabolism; UMP biosynthesis via de novo pathway; (S)-dihydroorotate from bicarbonate: step 3/3. In terms of biological role, catalyzes the reversible cyclization of carbamoyl aspartate to dihydroorotate. The sequence is that of Dihydroorotase from Sulfolobus acidocaldarius (strain ATCC 33909 / DSM 639 / JCM 8929 / NBRC 15157 / NCIMB 11770).